Consider the following 594-residue polypeptide: Glutamate decarboxylase 1 (594 aa).

A compositionally biased stretch (low complexity) spans 1–13; the sequence is MASSTPSSSATSS. Positions 1-23 are disordered; the sequence is MASSTPSSSATSSNAGADPNTTN. The residue at position 78 (Ser78) is a Phosphoserine. 190-192 serves as a coordination point for 4-aminobutanoate; sequence QLS. Lys405 bears the N6-(pyridoxal phosphate)lysine mark. Arg567 lines the 4-aminobutanoate pocket.

The protein belongs to the group II decarboxylase family. As to quaternary structure, homodimer. Pyridoxal 5'-phosphate serves as cofactor.

The catalysed reaction is L-glutamate + H(+) = 4-aminobutanoate + CO2. Its function is as follows. Catalyzes the synthesis of the inhibitory neurotransmitter gamma-aminobutyric acid (GABA) with pyridoxal 5'-phosphate as cofactor. This Bos taurus (Bovine) protein is Glutamate decarboxylase 1 (GAD1).